The chain runs to 478 residues: ATP-dependent RNA helicase DDX19A (478 aa).

Alanine 2 is subject to N-acetylalanine. Residues 2–299 (ATDSWALAVD…DPNIIKLKRE (298 aa)) are N-terminal lobe. Residue lysine 26 forms a Glycyl lysine isopeptide (Lys-Gly) (interchain with G-Cter in SUMO1); alternate linkage. Residue lysine 26 forms a Glycyl lysine isopeptide (Lys-Gly) (interchain with G-Cter in SUMO2); alternate linkage. The interval 34 to 53 (TNGVIKTSTTAEKTEEEEKE) is disordered. Threonine 42 is subject to Phosphothreonine. An N-terminal helix region spans residues 54–67 (DRAAQSLLNKLIRS). Positions 91-119 (KSFEELRLKPQLLQGVYAMGFNRPSKIQE) match the Q motif motif. Residues glutamine 118 and 137–144 (SQSGTGKT) each bind ATP. One can recognise a Helicase ATP-binding domain in the interval 124–294 (MMLAEPPQNL…QKVVPDPNII (171 aa)). The DEAD box signature appears at 241–244 (DEAD). Residues 300–478 (EETLDTIKQY…DLDEIEKIAN (179 aa)) form a C-terminal lobe region. The region spanning 305–473 (TIKQYYVLCN…RLDTDDLDEI (169 aa)) is the Helicase C-terminal domain. 2 residues coordinate ATP: arginine 428 and arginine 431.

It belongs to the DEAD box helicase family. DDX19/DBP5 subfamily. As to expression, found in testis, heart, brain, liver, skeletal muscle, and kidney.

It is found in the cytoplasm. It localises to the nucleus. Its subcellular location is the nucleoplasm. The enzyme catalyses ATP + H2O = ADP + phosphate + H(+). Its function is as follows. ATP-dependent RNA helicase involved in mRNA export from the nucleus. Rather than unwinding RNA duplexes, DDX19 functions as a remodeler of ribonucleoprotein particles, whereby proteins bound to nuclear mRNA are dissociated and replaced by cytoplasmic mRNA binding proteins. This is ATP-dependent RNA helicase DDX19A (Ddx19a) from Mus musculus (Mouse).